Consider the following 408-residue polypeptide: MIPGNRMLMVVLLCQVLLGGASHASLIPETGKKKVAEIQGHAGGRRSGQSHELLRDFEATLLQMFGLRRRPQPSKSAVIPDYMRDLYRLQSGEEEEEEQSQGTGLEYPERPASRANTVRSFHHEEHLENIPGTSESSAFRFLFNLSSIPENEVISSAELRLFREQVDQGPDWEQGFHRINIYEVMKPPAEMVPGHLITRLLDTRLVHHNVTRWETFDVSPAVLRWTREKQPNYGLAIEVTHLHQTRTHQGQHVRISRSLPQGSGDWAQLRPLLVTFGHDGRGHTLTRRRAKRSPKHHPQRSRKKNKNCRRHSLYVDFSDVGWNDWIVAPPGYQAFYCHGDCPFPLADHLNSTNHAIVQTLVNSVNSSIPKACCVPTELSAISMLYLDEYDKVVLKNYQEMVVEGCGCR.

Residues methionine 1–glycine 19 form the signal peptide. A propeptide spanning residues glycine 20–arginine 292 is cleaved from the precursor. Phosphoserine is present on serine 91. The interval serine 91–proline 111 is disordered. Asparagine 144 and asparagine 209 each carry an N-linked (GlcNAc...) asparagine glycan. Positions arginine 281 to asparagine 307 are disordered. A compositionally biased stretch (basic residues) spans threonine 284 to asparagine 307. Intrachain disulfides connect cysteine 308-cysteine 373, cysteine 337-cysteine 405, and cysteine 341-cysteine 407. N-linked (GlcNAc...) asparagine glycosylation is found at asparagine 350 and asparagine 365.

This sequence belongs to the TGF-beta family. As to quaternary structure, homodimer; disulfide-linked. Interacts with SOSTDC1, GREM2, RGMA, RGMB and RGMC. Part of a complex consisting of TWSG1 and CHRD. Interacts with the serine proteases, HTRA1 and HTRA3; the interaction with either inhibits BMP4-mediated signaling. The HTRA protease activity is required for this inhibition. Interacts with FBN1 (via N-terminal domain) and FBN2. Interacts with type I receptor BMPR1A. Interacts with type II receptor BMPR2. Interacts with FSTL1; this interaction inhibits the activation of the BMP4/Smad1/5/8 signaling pathway. Interacts with SCUBE3. Interacts with TGFBR3. In the cochlea, detected in nonprosensory regions and outer sulcus (at protein level). Prior to gastrulation, expressed in the extraembryonic ectoderm. Later, expressed in the extraembryonic mesoderm.

It is found in the secreted. It localises to the extracellular space. The protein localises to the extracellular matrix. Functionally, growth factor of the TGF-beta superfamily that plays essential roles in many developmental processes, including neurogenesis, vascular development, angiogenesis and osteogenesis. Acts in concert with PTHLH/PTHRP to stimulate ductal outgrowth during embryonic mammary development and to inhibit hair follicle induction. Initiates the canonical BMP signaling cascade by associating with type I receptor BMPR1A and type II receptor BMPR2. Once all three components are bound together in a complex at the cell surface, BMPR2 phosphorylates and activates BMPR1A. In turn, BMPR1A propagates signal by phosphorylating SMAD1/5/8 that travel to the nucleus and act as activators and repressors of transcription of target genes. Positively regulates the expression of odontogenic development regulator MSX1 via inducing the IPO7-mediated import of SMAD1 to the nucleus. Required for MSX1-mediated mesenchymal molar tooth bud development beyond the bud stage, via promoting Wnt signaling. Acts as a positive regulator of odontoblast differentiation during mesenchymal tooth germ formation, expression is repressed during the bell stage by MSX1-mediated inhibition of CTNNB1 signaling. Able to induce its own expression in dental mesenchymal cells and also in the neighboring dental epithelial cells via an MSX1-mediated pathway. Can also signal through non-canonical BMP pathways such as ERK/MAP kinase, PI3K/Akt or SRC cascades. For example, induces SRC phosphorylation which, in turn, activates VEGFR2, leading to an angiogenic response. This is Bone morphogenetic protein 4 from Mus musculus (Mouse).